A 301-amino-acid chain; its full sequence is tRNA pseudouridine synthase B (301 aa).

Asp-38 serves as the catalytic Nucleophile.

Belongs to the pseudouridine synthase TruB family. Type 1 subfamily.

It carries out the reaction uridine(55) in tRNA = pseudouridine(55) in tRNA. Its function is as follows. Responsible for synthesis of pseudouridine from uracil-55 in the psi GC loop of transfer RNAs. The polypeptide is tRNA pseudouridine synthase B (Lacticaseibacillus paracasei (strain ATCC 334 / BCRC 17002 / CCUG 31169 / CIP 107868 / KCTC 3260 / NRRL B-441) (Lactobacillus paracasei)).